We begin with the raw amino-acid sequence, 368 residues long: tRNA 2-selenouridine synthase (368 aa).

In terms of domain architecture, Rhodanese spans 15-138 (FLNQHPIMDV…MRQYLIGVIE (124 aa)). Cys-98 (S-selanylcysteine intermediate) is an active-site residue.

This sequence belongs to the SelU family. Monomer.

It carries out the reaction 5-methylaminomethyl-2-thiouridine(34) in tRNA + selenophosphate + (2E)-geranyl diphosphate + H2O + H(+) = 5-methylaminomethyl-2-selenouridine(34) in tRNA + (2E)-thiogeraniol + phosphate + diphosphate. It catalyses the reaction 5-methylaminomethyl-2-thiouridine(34) in tRNA + (2E)-geranyl diphosphate = 5-methylaminomethyl-S-(2E)-geranyl-thiouridine(34) in tRNA + diphosphate. The catalysed reaction is 5-methylaminomethyl-S-(2E)-geranyl-thiouridine(34) in tRNA + selenophosphate + H(+) = 5-methylaminomethyl-2-(Se-phospho)selenouridine(34) in tRNA + (2E)-thiogeraniol. The enzyme catalyses 5-methylaminomethyl-2-(Se-phospho)selenouridine(34) in tRNA + H2O = 5-methylaminomethyl-2-selenouridine(34) in tRNA + phosphate. Functionally, involved in the post-transcriptional modification of the uridine at the wobble position (U34) of tRNA(Lys), tRNA(Glu) and tRNA(Gln). Catalyzes the conversion of 2-thiouridine (S2U-RNA) to 2-selenouridine (Se2U-RNA). Acts in a two-step process involving geranylation of 2-thiouridine (S2U) to S-geranyl-2-thiouridine (geS2U) and subsequent selenation of the latter derivative to 2-selenouridine (Se2U) in the tRNA chain. The sequence is that of tRNA 2-selenouridine synthase from Shewanella baltica (strain OS155 / ATCC BAA-1091).